We begin with the raw amino-acid sequence, 370 residues long: Nociceptin receptor (370 aa).

Residues 1–48 (MESLFPAPFWEVLYGSPLQGNLSLLSPNHSLLPPHLLLNASHGAFLPL) lie on the Extracellular side of the membrane. 3 N-linked (GlcNAc...) asparagine glycosylation sites follow: Asn-21, Asn-28, and Asn-39. The helical transmembrane segment at 49–74 (GLKVTIVGLYLAVCVGGLLGNCLVMY) threads the bilayer. At 75-87 (VILRHTKMKTATN) the chain is on the cytoplasmic side. Residues 88 to 109 (IYIFNLALADTAVLLTLPFQGT) traverse the membrane as a helical segment. Topologically, residues 110–124 (DVLLGFWPFGNALCK) are extracellular. A disulfide bridge links Cys-123 with Cys-200. Residues 125 to 146 (AVIAIDYYNMFTSAFTLTAMSV) form a helical membrane-spanning segment. Residues 147–165 (DRYVAICHPIRALDVRTSS) are Cytoplasmic-facing. A helical membrane pass occupies residues 166 to 188 (KAQAVNVAIWALASIVGVPVAIM). The Extracellular portion of the chain corresponds to 189–211 (GSAQVEDEEIECLVEIPAPQDYW). The helical transmembrane segment at 212-236 (GPVFAVCIFLFSFVIPVLIISVCYS) threads the bilayer. The Cytoplasmic segment spans residues 237-264 (LMVRRLRGVRLLSGSREKDRNLRRITRL). The helical transmembrane segment at 265–285 (VLVVVAVFVGCWTPVQVFVLV) threads the bilayer. The Extracellular segment spans residues 286–300 (QGLGVQPGSETAVAV). Residues 301–322 (LRFCTALGYVNSCLNPILYAFL) form a helical membrane-spanning segment. The Cytoplasmic segment spans residues 323 to 370 (DENFKACFRKFCCAPTRRREMQVSDRVRSIAKDVALACKTSETVPRPA). Cys-334 carries the S-palmitoyl cysteine lipid modification.

It belongs to the G-protein coupled receptor 1 family. Post-translationally, phosphorylation at Ser-363 requires GRK3. Detected in brain cortex, stomach, ileum, jejunum and colon.

It localises to the cell membrane. The protein resides in the cytoplasmic vesicle. In terms of biological role, G-protein coupled opioid receptor that functions as a receptor for the endogenous neuropeptide nociceptin. Ligand binding causes a conformation change that triggers signaling via guanine nucleotide-binding proteins (G proteins) and modulates the activity of down-stream effectors. Signaling via G proteins mediates inhibition of adenylate cyclase activity and calcium channel activity. Arrestins modulate signaling via G proteins and mediate the activation of alternative signaling pathways that lead to the activation of MAP kinases. Plays a role in modulating nociception and the perception of pain. Plays a role in the regulation of locomotor activity by the neuropeptide nociceptin. The chain is Nociceptin receptor (OPRL1) from Sus scrofa (Pig).